A 716-amino-acid chain; its full sequence is Phosphoribosylformylglycinamidine synthase subunit PurL (716 aa).

His33 is a catalytic residue. ATP is bound at residue Tyr36. A Mg(2+)-binding site is contributed by Glu77. Residues 78 to 81 (SHNH) and Arg100 each bind substrate. Residue His79 is the Proton acceptor of the active site. Asp101 contacts Mg(2+). Gln225 lines the substrate pocket. Asp253 lines the Mg(2+) pocket. Residue 297–299 (ESQ) participates in substrate binding. Residues Asn475 and Gly512 each coordinate ATP. Residue Asn513 participates in Mg(2+) binding. Ser515 contributes to the substrate binding site.

It belongs to the FGAMS family. Monomer. Part of the FGAM synthase complex composed of 1 PurL, 1 PurQ and 2 PurS subunits.

It localises to the cytoplasm. It carries out the reaction N(2)-formyl-N(1)-(5-phospho-beta-D-ribosyl)glycinamide + L-glutamine + ATP + H2O = 2-formamido-N(1)-(5-O-phospho-beta-D-ribosyl)acetamidine + L-glutamate + ADP + phosphate + H(+). It functions in the pathway purine metabolism; IMP biosynthesis via de novo pathway; 5-amino-1-(5-phospho-D-ribosyl)imidazole from N(2)-formyl-N(1)-(5-phospho-D-ribosyl)glycinamide: step 1/2. Part of the phosphoribosylformylglycinamidine synthase complex involved in the purines biosynthetic pathway. Catalyzes the ATP-dependent conversion of formylglycinamide ribonucleotide (FGAR) and glutamine to yield formylglycinamidine ribonucleotide (FGAM) and glutamate. The FGAM synthase complex is composed of three subunits. PurQ produces an ammonia molecule by converting glutamine to glutamate. PurL transfers the ammonia molecule to FGAR to form FGAM in an ATP-dependent manner. PurS interacts with PurQ and PurL and is thought to assist in the transfer of the ammonia molecule from PurQ to PurL. This is Phosphoribosylformylglycinamidine synthase subunit PurL from Methanosarcina mazei (strain ATCC BAA-159 / DSM 3647 / Goe1 / Go1 / JCM 11833 / OCM 88) (Methanosarcina frisia).